We begin with the raw amino-acid sequence, 641 residues long: 1-deoxy-D-xylulose-5-phosphate synthase (641 aa).

Thiamine diphosphate contacts are provided by residues His-79 and 120 to 122; that span reads AHS. Asp-151 is a Mg(2+) binding site. Thiamine diphosphate is bound by residues 152-153, Asn-180, Tyr-290, and Glu-372; that span reads GA. Asn-180 serves as a coordination point for Mg(2+).

The protein belongs to the transketolase family. DXPS subfamily. As to quaternary structure, homodimer. Requires Mg(2+) as cofactor. It depends on thiamine diphosphate as a cofactor.

It catalyses the reaction D-glyceraldehyde 3-phosphate + pyruvate + H(+) = 1-deoxy-D-xylulose 5-phosphate + CO2. The protein operates within metabolic intermediate biosynthesis; 1-deoxy-D-xylulose 5-phosphate biosynthesis; 1-deoxy-D-xylulose 5-phosphate from D-glyceraldehyde 3-phosphate and pyruvate: step 1/1. Functionally, catalyzes the acyloin condensation reaction between C atoms 2 and 3 of pyruvate and glyceraldehyde 3-phosphate to yield 1-deoxy-D-xylulose-5-phosphate (DXP). The sequence is that of 1-deoxy-D-xylulose-5-phosphate synthase from Bradyrhizobium sp. (strain BTAi1 / ATCC BAA-1182).